The chain runs to 461 residues: tRNA modification GTPase MnmE (461 aa).

Positions 23, 88, and 127 each coordinate (6S)-5-formyl-5,6,7,8-tetrahydrofolate. The 161-residue stretch at 223-383 folds into the TrmE-type G domain; the sequence is GLNTVIVGKP…LKECIKNLFF (161 aa). Asn233 is a binding site for K(+). GTP-binding positions include 233–238, 252–258, and 277–280; these read NVGKSS, TEIPGTT, and DTAG. Ser237 contacts Mg(2+). K(+) is bound by residues Thr252, Ile254, and Thr257. Thr258 provides a ligand contact to Mg(2+). Position 461 (Lys461) interacts with (6S)-5-formyl-5,6,7,8-tetrahydrofolate.

This sequence belongs to the TRAFAC class TrmE-Era-EngA-EngB-Septin-like GTPase superfamily. TrmE GTPase family. As to quaternary structure, homodimer. Heterotetramer of two MnmE and two MnmG subunits. K(+) is required as a cofactor.

The protein localises to the cytoplasm. Functionally, exhibits a very high intrinsic GTPase hydrolysis rate. Involved in the addition of a carboxymethylaminomethyl (cmnm) group at the wobble position (U34) of certain tRNAs, forming tRNA-cmnm(5)s(2)U34. This is tRNA modification GTPase MnmE from Clostridium botulinum (strain Langeland / NCTC 10281 / Type F).